Here is a 60-residue protein sequence, read N- to C-terminus: Large ribosomal subunit protein uL30 (60 aa).

It belongs to the universal ribosomal protein uL30 family. In terms of assembly, part of the 50S ribosomal subunit.

The sequence is that of Large ribosomal subunit protein uL30 from Kineococcus radiotolerans (strain ATCC BAA-149 / DSM 14245 / SRS30216).